Reading from the N-terminus, the 138-residue chain is Large ribosomal subunit protein uL16 (138 aa).

Residues 1–17 show a composition bias toward basic residues; that stretch reads MLIPRKVKHRKQHHPRQ. The disordered stretch occupies residues 1-22; that stretch reads MLIPRKVKHRKQHHPRQRGIAS.

Belongs to the universal ribosomal protein uL16 family. As to quaternary structure, part of the 50S ribosomal subunit.

In terms of biological role, binds 23S rRNA and is also seen to make contacts with the A and possibly P site tRNAs. This Mycobacterium leprae (strain Br4923) protein is Large ribosomal subunit protein uL16.